Consider the following 119-residue polypeptide: MARVKRGVIAHARHKKVIKLAKGYYGARSRVYRVANQAVIKSGQYSYRDRRNKKRDFRKLWIIRINAAVKNYNLSYSKFIYGLKLSSININRKILSEIAIFDKISFKKLVDYSKNALSI.

The protein belongs to the bacterial ribosomal protein bL20 family.

Binds directly to 23S ribosomal RNA and is necessary for the in vitro assembly process of the 50S ribosomal subunit. It is not involved in the protein synthesizing functions of that subunit. This Buchnera aphidicola subsp. Cinara cedri (strain Cc) protein is Large ribosomal subunit protein bL20.